The primary structure comprises 135 residues: P2Y purinoceptor 4 (135 aa).

Residues 1 to 25 (VHFSSSVMVLLFGLPFLVTLVCYGL) traverse the membrane as a helical segment. Residues 26–49 (MALRLCRPLPGAGQSSSRLRSLRT) are Cytoplasmic-facing. Residues 50 to 72 (IAVVMTVFAVCLVPFHITRTIYY) form a helical membrane-spanning segment. The Extracellular segment spans residues 73–90 (LARLLKADCQILNIVNVV). A helical transmembrane segment spans residues 91–112 (YKVTRPLASANSCLDPLLYLFT). Residues 113–135 (GDKYRHQLQRLCRVSAPQRRITA) are Cytoplasmic-facing.

It belongs to the G-protein coupled receptor 1 family. Expressed in brain, heart, stria vascularis and vestibular labyrinth.

It localises to the cell membrane. Its function is as follows. Receptor for ATP and UTP coupled to G-proteins that activate a phosphatidylinositol-calcium second messenger system. Not activated by UDP. This chain is P2Y purinoceptor 4 (P2RY4), found in Meriones unguiculatus (Mongolian jird).